Here is a 71-residue protein sequence, read N- to C-terminus: Natterin-P (71 aa).

The signal sequence occupies residues 1–18 (MKLLVLLVTLLVLSWTSA). A propeptide spanning residues 19–45 (EDLGDQEILENNEDNNHESELGEPAAQ) is cleaved from the precursor. The segment covering 22–31 (GDQEILENNE) has biased composition (acidic residues). Residues 22 to 54 (GDQEILENNEDNNHESELGEPAAQHTDDETSQL) are disordered. Cys-62 and Cys-71 are disulfide-bonded.

It belongs to the natterin family. In terms of tissue distribution, expressed by the venom gland.

The protein localises to the secreted. Its activity is regulated as follows. Inhibited by tissue-kallikrein inhibitor TKI and trasylol. Plasma kallikrein inhibitor PKSI527 and classical inhibitors of serine-, metallo-, thiol- or aspartate-peptidases evokes a minor inhibition of the peptide digestion. Its function is as follows. Shows nociceptive, edema-inducing and kininogenase activity with release of kallidin from low molecular weight kininogen. The cleavage occurs at Met-Lys bonds. This is Natterin-P from Thalassophryne nattereri (Copper Joe toadfish).